Reading from the N-terminus, the 386-residue chain is 3-hydroxyisobutyryl-CoA hydrolase, mitochondrial (386 aa).

The N-terminal 32 residues, 1–32 (MGLQGLCRLMSRFNSYKRTNIILQHLKMSNHT), are a transit peptide targeting the mitochondrion. Residue Lys92 is modified to N6-acetyllysine; alternate. The residue at position 92 (Lys92) is an N6-succinyllysine; alternate. Residues Glu121, Gly146, Glu169, and Asp177 each coordinate substrate. The residue at position 221 (Lys221) is an N6-acetyllysine; alternate. Lys221 carries the N6-succinyllysine; alternate modification. A Phosphoserine modification is found at Ser234. Residues Lys250 and Lys257 each carry the N6-succinyllysine modification. At Lys297 the chain carries N6-acetyllysine; alternate. Residue Lys297 is modified to N6-succinyllysine; alternate. Lys301 is modified (N6-succinyllysine). Lys353 carries the N6-acetyllysine; alternate modification. The residue at position 353 (Lys353) is an N6-succinyllysine; alternate. Ser356 carries the post-translational modification Phosphoserine. An N6-acetyllysine mark is found at Lys360 and Lys365. Lys377 is modified (N6-succinyllysine).

It belongs to the enoyl-CoA hydratase/isomerase family.

It localises to the mitochondrion. The catalysed reaction is 3-hydroxy-2-methylpropanoyl-CoA + H2O = 3-hydroxy-2-methylpropanoate + CoA + H(+). It participates in amino-acid degradation; L-valine degradation. In terms of biological role, hydrolyzes 3-hydroxyisobutyryl-CoA (HIBYL-CoA), a saline catabolite. Has high activity toward isobutyryl-CoA. Could be an isobutyryl-CoA dehydrogenase that functions in valine catabolism. Also hydrolyzes 3-hydroxypropanoyl-CoA. This chain is 3-hydroxyisobutyryl-CoA hydrolase, mitochondrial (HIBCH), found in Bos taurus (Bovine).